We begin with the raw amino-acid sequence, 358 residues long: Putative cell-type specific agglutination protein pfl7 (358 aa).

Positions 1-23 are cleaved as a signal peptide; it reads MNSLKSLCLKCIVTLCLLVNAFA. Residues Asn67, Asn88, Asn112, and Asn136 are each glycosylated (N-linked (GlcNAc...) asparagine). The interval 90-144 is disordered; it reads TISTSSSTPITASVPTSSSILSNSTIPTTSPVPTTSSTPTSSSILSNSTIPSSSS. Repeat copies occupy residues 148–180 and 181–218. Positions 148 to 218 are 2 X 36 AA approximate tandem repeats; that stretch reads STITTTIISG…GLVEVITPSC (71 aa). The 152-residue stretch at 207-358 folds into the DIPSY domain; sequence QSGLVEVITP…RADDVILVAY (152 aa). N-linked (GlcNAc...) asparagine glycosylation is found at Asn245 and Asn305.

This sequence belongs to the mam3/map4 family.

The protein resides in the cell surface. Functionally, may be involved in agglutination during conjugation or other aspects of colony formation. Induces flocculation when overexpressed. The polypeptide is Putative cell-type specific agglutination protein pfl7 (Schizosaccharomyces pombe (strain 972 / ATCC 24843) (Fission yeast)).